We begin with the raw amino-acid sequence, 183 residues long: Ribosome-recycling factor (183 aa).

It belongs to the RRF family.

The protein localises to the cytoplasm. Its function is as follows. Responsible for the release of ribosomes from messenger RNA at the termination of protein biosynthesis. May increase the efficiency of translation by recycling ribosomes from one round of translation to another. The chain is Ribosome-recycling factor from Mycoplasma mobile (strain ATCC 43663 / 163K / NCTC 11711) (Mesomycoplasma mobile).